An 87-amino-acid chain; its full sequence is Xibalbin-2 (87 aa).

Positions 1–25 are cleaved as a signal peptide; that stretch reads MKGVCTRKVLYFFMAVILFVAIVAS. The propeptide occupies 26 to 45; it reads EDTENRNPAMAMPLQRMEQE.

It belongs to the xibalbin-2 family. In terms of processing, contains 5 disulfide bonds. In terms of tissue distribution, expressed by the venom gland. Not found in the whole body.

It is found in the secreted. Probable neurotoxin. Moderately inhibits voltage-gated potassium channels (Kv1.1/KCNA1, Kv1.2/KCNA2, Kv1.3/KCNA3, and Kv1.6/KCNA6, with the highest toxicity against Kv1.6 (73.2% inhibition at 1 uM)) and weakly inhibits sodium channels (Nav1.4/SCN4A). Does not activate protein kinase A type II (PKA-II) and MAP kinase Erk1/2 in sensory neurons. Does not show cytotoxic activity. Does not have an impact on Ca2+, cAMP, and NO signaling in the cell types analyzed. Does not interfere with the adhesion of leukocytes to endothelial cells. Its function is as follows. Moderately inhibits voltage-gated potassium channels (Kv1.1/KCNA1, Kv1.2/KCNA2, Kv1.3/KCNA3, and Kv1.6/KCNA6, with the highest toxicity against Kv1.6 (75.9% inhibition at 1 uM)). Does not activate protein kinase A type II (PKA-II) and MAP kinase Erk1/2 in sensory neurons. Does not show cytotoxic activity. Does not have an impact on Ca2+, cAMP, and NO signaling in the cell types analyzed. Does not interfere with the adhesion of leukocytes to endothelial cells. This Xibalbanus tulumensis (Blind cave remipede) protein is Xibalbin-2.